We begin with the raw amino-acid sequence, 101 residues long: Protein S100-A4 (101 aa).

A2 carries the N-acetylalanine modification. EF-hand domains are found at residues 12–47 and 50–85; these read IVST…SFLG and TDEA…IAMM. Ca(2+) contacts are provided by K28 and E33. N6-acetyllysine is present on K35. Residues D63, N65, D67, E69, and E74 each contribute to the Ca(2+) site.

Belongs to the S-100 family. As to quaternary structure, homodimer. Interacts with PPFIBP1 in a calcium-dependent mode. Interacts with PGLYRP1; this complex acts as a chemoattractant that promotes lymphocyte movement. Interacts with MYH9; this interaction increases cell motility. Interacts with Annexin 2/ANXA2. Interacts with TP53; this interaction promotes TP53 degradation. Interacts with CCR5 and CXCR3. Interacts with FCGR3A; this interaction inhibits PKC-dependent phosphorylation of FCGR3A.

It is found in the secreted. The protein localises to the nucleus. Its subcellular location is the cytoplasm. Functionally, calcium-binding protein that plays a role in various cellular processes including motility, angiogenesis, cell differentiation, apoptosis, and autophagy. Increases cell motility and invasiveness by interacting with non-muscle myosin heavy chain (NMMHC) IIA/MYH9. Mechanistically, promotes filament depolymerization and increases the amount of soluble myosin-IIA, resulting in the formation of stable protrusions facilitating chemotaxis. Also modulates the pro-apoptotic function of TP53 by binding to its C-terminal transactivation domain within the nucleus and reducing its protein levels. Within the extracellular space, stimulates cytokine production including granulocyte colony-stimulating factor and CCL24 from T-lymphocytes. In addition, stimulates T-lymphocyte chemotaxis by acting as a chemoattractant complex with PGLYRP1 that promotes lymphocyte migration via CCR5 and CXCR3 receptors. This is Protein S100-A4 (S100a4) from Rattus norvegicus (Rat).